A 780-amino-acid polypeptide reads, in one-letter code: MAAPGGRSEPPQLPEYSCSYMVSRPVYSELAFQQQHERRLQERKTLRESLAKCCSCSRKRAFGVLKTLVPILEWLPKYRVKEWLLSDVISGVSTGLVATLQGMAYALLAAVPVGYGLYSAFFPILTYFIFGTSRHISVGPFPVVSLMVGSVVLSMAPDEHFLVSSSNGTVLNTTMIDTAARDTARVLIASALTLLVGIIQLIFGGLQIGFIVRYLADPLVGGFTTAAAFQVLVSQLKIVLNVSTKNYNGVLSIIYTLVEIFQNIGDTNLADFTAGLLTIVVCMAVKELNDRFRHKIPVPIPIEVIVTIIATAISYGANLEKNYNAGIVKSIPRGFLPPELPPVSLFSEMLAASFSIAVVAYAIAVSVGKVYATKYDYTIDGNQEFIAFGISNIFSGFFSCFVATTALSRTAVQESTGGKTQVAGIISAAIVMIAILALGKLLEPLQKSVLAAVVIANLKGMFMQLCDIPRLWRQNKIDAVIWVFTCIVSIILGLDLGLLAGLIFGLLTVVLRVQFPSWNGLGSIPSTDIYKSTKNYKNIEEPQGVKILRFSSPIFYGNVDGFKKCIKSTVGFDAIRVYNKRLKALRKIQKLIKSGQLRATKNGIISDAVSTNNAFEPDEDIEDLEELDIPTKEIEIQVDWNSELPVKVNVPKVPIHSLVLDCGAISFLDVVGVRSLRVIVKEFQRIDVNVYFASLQDYVIEKLEQCGFFDDNIRKDTFFLTVHDAILYLQNQVKSQEGQGSILETITLIQDCKDTLELIETELTEEELDVQDEAMRTLAS.

Residues 1–87 are Cytoplasmic-facing; the sequence is MAAPGGRSEP…YRVKEWLLSD (87 aa). A helical transmembrane segment spans residues 88–108; it reads VISGVSTGLVATLQGMAYALL. Ala109 is a topological domain (extracellular). Residues 110–130 form a helical membrane-spanning segment; it reads AVPVGYGLYSAFFPILTYFIF. Over 131 to 135 the chain is Cytoplasmic; the sequence is GTSRH. The helical transmembrane segment at 136 to 156 threads the bilayer; the sequence is ISVGPFPVVSLMVGSVVLSMA. The Extracellular segment spans residues 157 to 191; it reads PDEHFLVSSSNGTVLNTTMIDTAARDTARVLIASA. Residues 192–212 traverse the membrane as a helical segment; that stretch reads LTLLVGIIQLIFGGLQIGFIV. At 213-218 the chain is on the cytoplasmic side; sequence RYLADP. A helical membrane pass occupies residues 219–239; sequence LVGGFTTAAAFQVLVSQLKIV. The Extracellular portion of the chain corresponds to 240 to 263; that stretch reads LNVSTKNYNGVLSIIYTLVEIFQN. The helical transmembrane segment at 264–284 threads the bilayer; that stretch reads IGDTNLADFTAGLLTIVVCMA. Over 285–295 the chain is Cytoplasmic; that stretch reads VKELNDRFRHK. A helical membrane pass occupies residues 296–316; sequence IPVPIPIEVIVTIIATAISYG. Topologically, residues 317 to 344 are extracellular; the sequence is ANLEKNYNAGIVKSIPRGFLPPELPPVS. The helical transmembrane segment at 345 to 365 threads the bilayer; sequence LFSEMLAASFSIAVVAYAIAV. Residues 366–384 lie on the Cytoplasmic side of the membrane; the sequence is SVGKVYATKYDYTIDGNQE. A helical membrane pass occupies residues 385–405; the sequence is FIAFGISNIFSGFFSCFVATT. Topologically, residues 406-421 are extracellular; sequence ALSRTAVQESTGGKTQ. The helical transmembrane segment at 422-442 threads the bilayer; the sequence is VAGIISAAIVMIAILALGKLL. The Cytoplasmic portion of the chain corresponds to 443 to 448; it reads EPLQKS. Residues 449 to 469 traverse the membrane as a helical segment; it reads VLAAVVIANLKGMFMQLCDIP. Residues 470–486 lie on the Extracellular side of the membrane; sequence RLWRQNKIDAVIWVFTC. Residues 487 to 507 form a helical membrane-spanning segment; the sequence is IVSIILGLDLGLLAGLIFGLL. Over 508–780 the chain is Cytoplasmic; it reads TVVLRVQFPS…QDEAMRTLAS (273 aa). The STAS domain maps to 535–729; sequence NYKNIEEPQG…LTVHDAILYL (195 aa).

This sequence belongs to the SLC26A/SulP transporter (TC 2.A.53) family. In terms of assembly, interacts with IQGAP1; this interaction enhances the chloride-bicarbonate exchange activity of SLC26A4. In terms of tissue distribution, highly expressed in the kidney (at protein level). High expression in adult thyroid, lower expression in adult and fetal kidney and fetal brain. Not expressed in other tissues.

The protein resides in the cell membrane. It is found in the apical cell membrane. The enzyme catalyses chloride(in) = chloride(out). It carries out the reaction iodide(out) = iodide(in). The catalysed reaction is hydrogencarbonate(in) + chloride(out) = hydrogencarbonate(out) + chloride(in). It catalyses the reaction iodide(in) + hydrogencarbonate(out) = iodide(out) + hydrogencarbonate(in). The enzyme catalyses iodide(in) + chloride(out) = iodide(out) + chloride(in). It carries out the reaction formate(in) + chloride(out) = formate(out) + chloride(in). Functionally, sodium-independent transporter of chloride and iodide. Mediates electroneutral chloride-bicarbonate, chloride-iodide and chloride-formate exchange with 1:1 stoichiometry. Mediates electroneutral iodide-bicarbonate exchange. This Homo sapiens (Human) protein is Pendrin (SLC26A4).